Reading from the N-terminus, the 245-residue chain is Carboxymethylenebutenolidase homolog (245 aa).

Ala-2 is modified (N-acetylalanine). Catalysis depends on residues Cys-132, Asp-179, and His-212. Ser-223 carries the phosphoserine modification.

Belongs to the dienelactone hydrolase family.

It localises to the cytoplasm. The protein localises to the cytosol. Its function is as follows. Cysteine hydrolase. This Mus musculus (Mouse) protein is Carboxymethylenebutenolidase homolog (Cmbl).